The primary structure comprises 372 residues: N-methyl-L-tryptophan oxidase (372 aa).

Residue 4 to 34 (DLIIIGSGSVGAAAGYYATRAGLKVLMTDAH) coordinates FAD. Cys-307 is modified (S-8alpha-FAD cysteine).

This sequence belongs to the MSOX/MTOX family. MTOX subfamily. In terms of assembly, monomer. Requires FAD as cofactor.

It catalyses the reaction N(alpha)-methyl-L-tryptophan + O2 + H2O = L-tryptophan + formaldehyde + H2O2. In terms of biological role, catalyzes the oxidative demethylation of N-methyl-L-tryptophan. The sequence is that of N-methyl-L-tryptophan oxidase from Salmonella typhi.